Consider the following 255-residue polypeptide: Leucyl/phenylalanyl-tRNA--protein transferase (255 aa).

Belongs to the L/F-transferase family.

The protein resides in the cytoplasm. The catalysed reaction is N-terminal L-lysyl-[protein] + L-leucyl-tRNA(Leu) = N-terminal L-leucyl-L-lysyl-[protein] + tRNA(Leu) + H(+). It catalyses the reaction N-terminal L-arginyl-[protein] + L-leucyl-tRNA(Leu) = N-terminal L-leucyl-L-arginyl-[protein] + tRNA(Leu) + H(+). The enzyme catalyses L-phenylalanyl-tRNA(Phe) + an N-terminal L-alpha-aminoacyl-[protein] = an N-terminal L-phenylalanyl-L-alpha-aminoacyl-[protein] + tRNA(Phe). In terms of biological role, functions in the N-end rule pathway of protein degradation where it conjugates Leu, Phe and, less efficiently, Met from aminoacyl-tRNAs to the N-termini of proteins containing an N-terminal arginine or lysine. This Burkholderia pseudomallei (strain 1106a) protein is Leucyl/phenylalanyl-tRNA--protein transferase.